We begin with the raw amino-acid sequence, 212 residues long: TATA-box-binding protein 2 (212 aa).

A run of 2 repeats spans residues 30-114 (THPE…KKIG) and 120-201 (SNFN…YPIL).

It belongs to the TBP family. In terms of assembly, belongs to the TFIID complex together with the TBP-associated factors (TAFs). Binds DNA as monomer.

Its subcellular location is the nucleus. Functionally, general transcription factor that functions at the core of the DNA-binding multiprotein factor TFIID. Binding of TFIID to the TATA box is the initial transcriptional step of the pre-initiation complex (PIC), playing a role in the activation of eukaryotic genes transcribed by RNA polymerase II. This is TATA-box-binding protein 2 from Entamoeba histolytica (strain ATCC 30459 / HM-1:IMSS / ABRM).